The following is a 151-amino-acid chain: Large ribosomal subunit protein bL9 (151 aa).

It belongs to the bacterial ribosomal protein bL9 family.

In terms of biological role, binds to the 23S rRNA. This Lactobacillus acidophilus (strain ATCC 700396 / NCK56 / N2 / NCFM) protein is Large ribosomal subunit protein bL9.